A 107-amino-acid polypeptide reads, in one-letter code: Toluene 1,2-dioxygenase system ferredoxin subunit (107 aa).

Residues 4-99 (TYILRQGDLP…IKVEGDEVHV (96 aa)) form the Rieske domain. [2Fe-2S] cluster contacts are provided by Cys43, His45, Cys62, and His65.

This sequence belongs to the bacterial ring-hydroxylating dioxygenase ferredoxin component family. This dioxygenase system consists of four proteins: the two subunits of the hydroxylase component (todC1 and todC2), a ferredoxin (TodB) and a ferredoxin reductase (TodA).

Its pathway is xenobiotic degradation; toluene degradation. Functionally, this protein seems to be a 2Fe-2S ferredoxin. The chain is Toluene 1,2-dioxygenase system ferredoxin subunit (todB) from Pseudomonas putida (strain ATCC 700007 / DSM 6899 / JCM 31910 / BCRC 17059 / LMG 24140 / F1).